The sequence spans 176 residues: Probable DNA-directed RNA polymerase subunit delta (176 aa).

The 68-residue stretch at 14–81 (CSMIEVVHSV…GENRWGLRSW (68 aa)) folds into the HTH HARE-type domain. The tract at residues 91 to 176 (ILPQPKPKKK…ETEEEEEEEL (86 aa)) is disordered. Positions 106–176 (DGFDDYIEED…ETEEEEEEEL (71 aa)) are enriched in acidic residues.

It belongs to the RpoE family. As to quaternary structure, RNAP is composed of a core of 2 alpha, a beta and a beta' subunits. The core is associated with a delta subunit and one of several sigma factors.

Functionally, participates in both the initiation and recycling phases of transcription. In the presence of the delta subunit, RNAP displays an increased specificity of transcription, a decreased affinity for nucleic acids, and an increased efficiency of RNA synthesis because of enhanced recycling. The polypeptide is Probable DNA-directed RNA polymerase subunit delta (Bacillus thuringiensis (strain Al Hakam)).